Consider the following 247-residue polypeptide: Triosephosphate isomerase (247 aa).

Substrate is bound at residue 10 to 12; sequence NWK. His92 serves as the catalytic Electrophile. Glu164 (proton acceptor) is an active-site residue. Substrate-binding positions include Gly170, Ser209, and 230–231; that span reads GG.

Belongs to the triosephosphate isomerase family. In terms of assembly, homodimer.

Its subcellular location is the cytoplasm. It catalyses the reaction D-glyceraldehyde 3-phosphate = dihydroxyacetone phosphate. Its pathway is carbohydrate biosynthesis; gluconeogenesis. It functions in the pathway carbohydrate degradation; glycolysis; D-glyceraldehyde 3-phosphate from glycerone phosphate: step 1/1. Its function is as follows. Involved in the gluconeogenesis. Catalyzes stereospecifically the conversion of dihydroxyacetone phosphate (DHAP) to D-glyceraldehyde-3-phosphate (G3P). This is Triosephosphate isomerase from Alcanivorax borkumensis (strain ATCC 700651 / DSM 11573 / NCIMB 13689 / SK2).